A 516-amino-acid polypeptide reads, in one-letter code: BAR/IMD domain-containing adapter protein 2-like 1 (516 aa).

The region spanning 1–249 is the IMD domain; it reads MSRGPEEVNR…MNMIEEIKTP (249 aa). Residues 115–148 adopt a coiled-coil conformation; sequence MNATLKRYQAEHRNKLDSLEKSQAELKKIRRKSQ. Residues Thr248 and Thr257 each carry the phosphothreonine modification. A phosphoserine mark is found at Ser261 and Ser281. The tract at residues 303–328 is disordered; the sequence is NPATAGQSAEKTNNSTANTGDDPSLQ. Phosphoserine is present on Ser332. An SH3 domain is found at 340 to 403; it reads MKKQKVKTIF…PSSYTKLLEE (64 aa). At Thr413 the chain carries Phosphothreonine. Residues Ser415, Ser421, and Ser423 each carry the phosphoserine modification. Residues 454 to 516 are disordered; the sequence is ADAAKIPSTS…TNDRSAPIIR (63 aa). Positions 474–485 are enriched in polar residues; it reads ATSTSPSDSNGT. The binds F-actin stretch occupies residues 488–516; it reads PPFLSGENPFATVKLRPTVTNDRSAPIIR.

In terms of assembly, interacts with RAC1. Binds to F-actin. Interacts with FASLG. In terms of processing, phosphorylated on tyrosine in response to insulin.

The protein resides in the cytoplasm. Its subcellular location is the cytoskeleton. Its function is as follows. May function as adapter protein. Involved in the formation of clusters of actin bundles. Plays a role in the reorganization of the actin cytoskeleton in response to bacterial infection. In Rattus norvegicus (Rat), this protein is BAR/IMD domain-containing adapter protein 2-like 1 (Baiap2l1).